The chain runs to 525 residues: uncharacterized protein (525 aa).

Positions 21–48 (CLICRSMRKKCDEVHPQCGRCLKAGKQC) form a DNA-binding region, zn(2)-C6 fungal-type.

It is found in the cytoplasm. The protein resides in the nucleus. This is an uncharacterized protein from Schizosaccharomyces pombe (strain 972 / ATCC 24843) (Fission yeast).